The following is a 240-amino-acid chain: Ribosomal RNA large subunit methyltransferase E (240 aa).

Over residues 1-20 the composition is skewed to gly residues; it reads MSKAGGNKGGSRTGGRGGAG. The tract at residues 1–40 is disordered; the sequence is MSKAGGNKGGSRTGGRGGAGSSNLHVRVKKKAGTTKESSR. S-adenosyl-L-methionine-binding residues include Gly92, Trp94, Asp115, Asp131, and Asp155. The active-site Proton acceptor is the Lys195.

This sequence belongs to the class I-like SAM-binding methyltransferase superfamily. RNA methyltransferase RlmE family.

Its subcellular location is the cytoplasm. The enzyme catalyses uridine(2552) in 23S rRNA + S-adenosyl-L-methionine = 2'-O-methyluridine(2552) in 23S rRNA + S-adenosyl-L-homocysteine + H(+). Functionally, specifically methylates the uridine in position 2552 of 23S rRNA at the 2'-O position of the ribose in the fully assembled 50S ribosomal subunit. The chain is Ribosomal RNA large subunit methyltransferase E from Brucella ovis (strain ATCC 25840 / 63/290 / NCTC 10512).